A 273-amino-acid polypeptide reads, in one-letter code: Dermonecrotic toxin LapSicTox-alphaIB1aii (273 aa).

Residue His5 is part of the active site. Positions 25 and 27 each coordinate Mg(2+). Catalysis depends on His41, which acts as the Nucleophile. Cystine bridges form between Cys45/Cys51 and Cys47/Cys190. Position 85 (Asp85) interacts with Mg(2+). N-linked (GlcNAc...) asparagine glycosylation occurs at Asn250.

The protein belongs to the arthropod phospholipase D family. Class II subfamily. Requires Mg(2+) as cofactor. In terms of tissue distribution, expressed by the venom gland.

It is found in the secreted. The catalysed reaction is an N-(acyl)-sphingosylphosphocholine = an N-(acyl)-sphingosyl-1,3-cyclic phosphate + choline. It catalyses the reaction an N-(acyl)-sphingosylphosphoethanolamine = an N-(acyl)-sphingosyl-1,3-cyclic phosphate + ethanolamine. It carries out the reaction a 1-acyl-sn-glycero-3-phosphocholine = a 1-acyl-sn-glycero-2,3-cyclic phosphate + choline. The enzyme catalyses a 1-acyl-sn-glycero-3-phosphoethanolamine = a 1-acyl-sn-glycero-2,3-cyclic phosphate + ethanolamine. Its function is as follows. Dermonecrotic toxins cleave the phosphodiester linkage between the phosphate and headgroup of certain phospholipids (sphingolipid and lysolipid substrates), forming an alcohol (often choline) and a cyclic phosphate. This toxin acts on sphingomyelin (SM). It may also act on ceramide phosphoethanolamine (CPE), lysophosphatidylcholine (LPC) and lysophosphatidylethanolamine (LPE), but not on lysophosphatidylserine (LPS), and lysophosphatidylglycerol (LPG). It acts by transphosphatidylation, releasing exclusively cyclic phosphate products as second products. Induces dermonecrosis, hemolysis, increased vascular permeability, edema, inflammatory response, and platelet aggregation. In Loxosceles apachea (Apache recluse spider), this protein is Dermonecrotic toxin LapSicTox-alphaIB1aii.